A 571-amino-acid polypeptide reads, in one-letter code: Proline--tRNA ligase (571 aa).

Belongs to the class-II aminoacyl-tRNA synthetase family. ProS type 1 subfamily. In terms of assembly, homodimer.

Its subcellular location is the cytoplasm. It carries out the reaction tRNA(Pro) + L-proline + ATP = L-prolyl-tRNA(Pro) + AMP + diphosphate. Catalyzes the attachment of proline to tRNA(Pro) in a two-step reaction: proline is first activated by ATP to form Pro-AMP and then transferred to the acceptor end of tRNA(Pro). As ProRS can inadvertently accommodate and process non-cognate amino acids such as alanine and cysteine, to avoid such errors it has two additional distinct editing activities against alanine. One activity is designated as 'pretransfer' editing and involves the tRNA(Pro)-independent hydrolysis of activated Ala-AMP. The other activity is designated 'posttransfer' editing and involves deacylation of mischarged Ala-tRNA(Pro). The misacylated Cys-tRNA(Pro) is not edited by ProRS. In Pseudoalteromonas atlantica (strain T6c / ATCC BAA-1087), this protein is Proline--tRNA ligase.